The following is a 495-amino-acid chain: Beta-galactoside alpha-2,6-sialyltransferase 2 (495 aa).

The Cytoplasmic portion of the chain corresponds to 1–10; the sequence is MKPHLKQWRQ. A helical; Signal-anchor for type II membrane protein membrane pass occupies residues 11 to 31; sequence GMLCGVFAWGLFFVVIFLYFT. The Lumenal portion of the chain corresponds to 32 to 495; it reads DSSPAKPAPS…LQAVRCPPGA (464 aa). Disordered regions lie at residues 63-90 and 107-165; these read GASE…LRTW and GRTS…EDGE. A compositionally biased stretch (low complexity) spans 134–143; sequence PEGARPPRAA. Residues 144–153 are compositionally biased toward basic residues; it reads PGRRAKRGPR. 3 disulfide bridges follow: C225-C491, C268-C420, and C438-C449. N-linked (GlcNAc...) asparagine glycosylation is found at N279 and N309.

The protein belongs to the glycosyltransferase 29 family.

It localises to the golgi apparatus. It is found in the golgi stack membrane. It catalyses the reaction a beta-D-galactoside + CMP-N-acetyl-beta-neuraminate = an N-acetyl-alpha-neuraminyl-(2-&gt;6)-beta-D-galactosyl derivative + CMP + H(+). Its function is as follows. Transfers sialic acid from the donor of substrate CMP-sialic acid to galactose containing acceptor substrates. Has alpha-2,6-sialyltransferase activity toward oligosaccharides that have the Gal-beta-1,4-GlcNAc sequence at the non-reducing end of their carbohydrate groups, but it has weak or no activities toward glycoproteins and glycolipids. This chain is Beta-galactoside alpha-2,6-sialyltransferase 2 (ST6GAL2), found in Bos taurus (Bovine).